Reading from the N-terminus, the 470-residue chain is Argininosuccinate lyase (470 aa).

It belongs to the lyase 1 family. Argininosuccinate lyase subfamily.

The protein resides in the cytoplasm. It catalyses the reaction 2-(N(omega)-L-arginino)succinate = fumarate + L-arginine. The protein operates within amino-acid biosynthesis; L-arginine biosynthesis; L-arginine from L-ornithine and carbamoyl phosphate: step 3/3. The sequence is that of Argininosuccinate lyase from Mycobacterium sp. (strain JLS).